An 80-amino-acid polypeptide reads, in one-letter code: Conotoxin MaIr193 (80 aa).

The first 22 residues, 1–22 (MKLTCMMIVAVLFLTAWTLVTA), serve as a signal peptide directing secretion. A propeptide spanning residues 23-51 (DGTRDGLKNRFPKARLEMKNSEAPRSRGR) is cleaved from the precursor. 3 disulfides stabilise this stretch: Cys-52–Cys-69, Cys-59–Cys-73, and Cys-68–Cys-77. Pro-64 bears the 4-hydroxyproline mark.

The protein belongs to the conotoxin O1 superfamily. In terms of tissue distribution, expressed by the venom duct.

It localises to the secreted. The chain is Conotoxin MaIr193 from Conus marmoreus (Marble cone).